The following is a 260-amino-acid chain: Cytochrome c oxidase subunit 2 (260 aa).

Topologically, residues 1-43 are mitochondrial intermembrane; that stretch reads MILRLLECRFFTIALCDAAEPWQLGFQDAATPMMQGIIDLHHD. Residues 44–64 traverse the membrane as a helical segment; sequence IFFFLILILVFVLWMLVRALW. Topologically, residues 65–84 are mitochondrial matrix; it reads HFNEQTNPIPQRIVHGTTIE. The helical transmembrane segment at 85-105 threads the bilayer; it reads IIWTIFPSVILLFIAIPSFAL. The Mitochondrial intermembrane segment spans residues 106–260; it reads LYSMDGVLVD…VSNQLILQTN (155 aa). Cu cation contacts are provided by H189, C224, E226, C228, H232, and M235. E226 serves as a coordination point for Mg(2+).

This sequence belongs to the cytochrome c oxidase subunit 2 family. As to quaternary structure, component of the cytochrome c oxidase (complex IV, CIV), a multisubunit enzyme composed of a catalytic core of 3 subunits and several supernumerary subunits. The complex exists as a monomer or a dimer and forms supercomplexes (SCs) in the inner mitochondrial membrane with ubiquinol-cytochrome c oxidoreductase (cytochrome b-c1 complex, complex III, CIII). Cu cation serves as cofactor.

It localises to the mitochondrion inner membrane. The catalysed reaction is 4 Fe(II)-[cytochrome c] + O2 + 8 H(+)(in) = 4 Fe(III)-[cytochrome c] + 2 H2O + 4 H(+)(out). Its function is as follows. Component of the cytochrome c oxidase, the last enzyme in the mitochondrial electron transport chain which drives oxidative phosphorylation. The respiratory chain contains 3 multisubunit complexes succinate dehydrogenase (complex II, CII), ubiquinol-cytochrome c oxidoreductase (cytochrome b-c1 complex, complex III, CIII) and cytochrome c oxidase (complex IV, CIV), that cooperate to transfer electrons derived from NADH and succinate to molecular oxygen, creating an electrochemical gradient over the inner membrane that drives transmembrane transport and the ATP synthase. Cytochrome c oxidase is the component of the respiratory chain that catalyzes the reduction of oxygen to water. Electrons originating from reduced cytochrome c in the intermembrane space (IMS) are transferred via the dinuclear copper A center (CU(A)) of subunit 2 and heme A of subunit 1 to the active site in subunit 1, a binuclear center (BNC) formed by heme A3 and copper B (CU(B)). The BNC reduces molecular oxygen to 2 water molecules using 4 electrons from cytochrome c in the IMS and 4 protons from the mitochondrial matrix. The sequence is that of Cytochrome c oxidase subunit 2 (COX2) from Zea mays (Maize).